Consider the following 262-residue polypeptide: Outer dense fiber protein 1 (262 aa).

Residues Ser-5 and Ser-10 each carry the phosphoserine modification. The stretch at 34-38 (RCLCD) is repeat 1. The 2 X 5 AA repeats of [RC]-C-L-C-D stretch occupies residues 34–77 (RCLCDLYMHPYCCCDLHPYPYCLCYSKRSRSCGLCDLYPCCLCD). Ser-64 carries the phosphoserine modification. Residues 73-77 (CCLCD) form repeat 2. A phosphoserine mark is found at Ser-86, Ser-122, Ser-123, Ser-151, Ser-167, Ser-189, and Ser-194. Residues 209–250 (CNPCNPCSPCNPCNPCNPCNPCSPCSPCSPCNPCDPCNPCYP) are C-X-P repeat region.

As to quaternary structure, interacts (via leucine zipper motif) with TCP11. Interacts with SPAG4. Interacts with KLC3. Interacts with CCDC42.

It localises to the cell projection. It is found in the cilium. The protein resides in the flagellum. The protein localises to the cytoplasm. Its subcellular location is the cytoskeleton. It localises to the microtubule organizing center. It is found in the centrosome. Component of the outer dense fibers (ODF) of spermatozoa. ODF are filamentous structures located on the outside of the axoneme in the midpiece and principal piece of the mammalian sperm tail and may help to maintain the passive elastic structures and elastic recoil of the sperm tail. This Sus scrofa (Pig) protein is Outer dense fiber protein 1 (ODF1).